Consider the following 292-residue polypeptide: Phosphatidylglycerol--prolipoprotein diacylglyceryl transferase (292 aa).

Helical transmembrane passes span 18–38 (LFGV…GLLI), 67–87 (LLTW…VLFY), and 105–125 (GGMS…AFCL). Residue R150 participates in a 1,2-diacyl-sn-glycero-3-phospho-(1'-sn-glycerol) binding. 3 consecutive transmembrane segments (helical) span residues 193-213 (QIYE…LLVW), 222-242 (GSVS…VEFV), and 266-286 (GLTM…YLIL).

Belongs to the Lgt family.

It localises to the cell inner membrane. It catalyses the reaction L-cysteinyl-[prolipoprotein] + a 1,2-diacyl-sn-glycero-3-phospho-(1'-sn-glycerol) = an S-1,2-diacyl-sn-glyceryl-L-cysteinyl-[prolipoprotein] + sn-glycerol 1-phosphate + H(+). The protein operates within protein modification; lipoprotein biosynthesis (diacylglyceryl transfer). In terms of biological role, catalyzes the transfer of the diacylglyceryl group from phosphatidylglycerol to the sulfhydryl group of the N-terminal cysteine of a prolipoprotein, the first step in the formation of mature lipoproteins. The protein is Phosphatidylglycerol--prolipoprotein diacylglyceryl transferase of Cereibacter sphaeroides (strain ATCC 17029 / ATH 2.4.9) (Rhodobacter sphaeroides).